A 528-amino-acid chain; its full sequence is Carboxysome shell carbonic anhydrase (528 aa).

The tract at residues 17–47 (PIAPNPRWQKENPTAHGSTDTGGFGYNGGNE) is disordered. Cysteine 184 lines the Zn(2+) pocket. The Proton acceptor role is filled by aspartate 186. 2 residues coordinate Zn(2+): histidine 252 and cysteine 263.

It belongs to the beta-class carbonic anhydrase family. CsoSCA subfamily. As to quaternary structure, homodimer. The cofactor is Zn(2+).

The protein resides in the carboxysome. The catalysed reaction is hydrogencarbonate + H(+) = CO2 + H2O. With respect to regulation, inhibited by ethoxyzolamide and dithiothreitol (in crude extracts upon expression in E.coli). Reversible hydration of carbon dioxide. This bacteria encodes at least 3 CA enzymes. Essential for chemolithotrophic carbon dioxide fixation, supplies CO(2) to RuBisCO (ribulose bisphosphate carboxylase, cbbL-cbbS) in the carboxysome. The polypeptide is Carboxysome shell carbonic anhydrase (Hydrogenovibrio crunogenus (strain DSM 25203 / XCL-2) (Thiomicrospira crunogena)).